Reading from the N-terminus, the 339-residue chain is Phenylalanine--tRNA ligase alpha subunit (339 aa).

Residue Glu-247 coordinates Mg(2+).

Belongs to the class-II aminoacyl-tRNA synthetase family. Phe-tRNA synthetase alpha subunit type 1 subfamily. In terms of assembly, tetramer of two alpha and two beta subunits. Mg(2+) is required as a cofactor.

The protein localises to the cytoplasm. It carries out the reaction tRNA(Phe) + L-phenylalanine + ATP = L-phenylalanyl-tRNA(Phe) + AMP + diphosphate + H(+). This Deinococcus radiodurans (strain ATCC 13939 / DSM 20539 / JCM 16871 / CCUG 27074 / LMG 4051 / NBRC 15346 / NCIMB 9279 / VKM B-1422 / R1) protein is Phenylalanine--tRNA ligase alpha subunit (pheS).